Here is a 472-residue protein sequence, read N- to C-terminus: MDKKIQRFSCTTILVGKKASYDGSTMVARTEDSQNGDFTPKKMIVVKPEDQPRHYRSVQSSFEMDLPDNPMTYTSVPDALGKDGIWAEAGVNEANVTMSATETITTNSRVLGADPLVASGIGEEDMVTLVLPYIRSAREGVLRLGAILEDYGTYESNGVAFSDEHDIWWLETIGGHHWIARRVPDDAYVTNPNQFGIDHFEFNNPEDYLCSADLKDFIDTYHLDLTYSHEHFNPRYAFGSQRDKDRHYNTPRAWIMQKFLNPEIVQDPRSFALAWCQKPYRKITVEDVKYVLSSHYQDTGYDPYGSEGTPVSKKVFRPIGINRTSQTAILHIRPNKPQEIAAIQWIAYGSMPFNTMVPFFTQVKTIPDYFANTYENVSTDNFYWTNRLIAALADPHYNHHETDLDNYLEETMAKGHAMLHAVEAQLLAGETVDLEEENQKMSDYVQGETQTLLNKILFDASNLMTNRFSLSD.

The active site involves Cys10.

Belongs to the peptidase C69 family.

It catalyses the reaction an L-aminoacyl-L-amino acid + H2O = 2 an L-alpha-amino acid. The polypeptide is Probable dipeptidase A (pepDA) (Streptococcus pyogenes serotype M18 (strain MGAS8232)).